The sequence spans 186 residues: ATP synthase subunit b, chloroplastic (186 aa).

The helical transmembrane segment at 27-49 (LATNPINLSVVLGVLIFFGKGVL) threads the bilayer.

The protein belongs to the ATPase B chain family. As to quaternary structure, F-type ATPases have 2 components, F(1) - the catalytic core - and F(0) - the membrane proton channel. F(1) has five subunits: alpha(3), beta(3), gamma(1), delta(1), epsilon(1). F(0) has four main subunits: a(1), b(1), b'(1) and c(10-14). The alpha and beta chains form an alternating ring which encloses part of the gamma chain. F(1) is attached to F(0) by a central stalk formed by the gamma and epsilon chains, while a peripheral stalk is formed by the delta, b and b' chains.

It is found in the plastid. Its subcellular location is the chloroplast thylakoid membrane. Its function is as follows. F(1)F(0) ATP synthase produces ATP from ADP in the presence of a proton or sodium gradient. F-type ATPases consist of two structural domains, F(1) containing the extramembraneous catalytic core and F(0) containing the membrane proton channel, linked together by a central stalk and a peripheral stalk. During catalysis, ATP synthesis in the catalytic domain of F(1) is coupled via a rotary mechanism of the central stalk subunits to proton translocation. Component of the F(0) channel, it forms part of the peripheral stalk, linking F(1) to F(0). The polypeptide is ATP synthase subunit b, chloroplastic (Illicium oligandrum (Star anise)).